Reading from the N-terminus, the 358-residue chain is Probable anti-sigma-M factor YhdL (358 aa).

A helical membrane pass occupies residues 74-96 (ISVLAVISTLMILPLCTLGSYLY).

As to quaternary structure, the N-terminus of YhdL interacts with sigma-M. YhdL interacts specifically with YhdK.

It localises to the membrane. In Bacillus subtilis (strain 168), this protein is Probable anti-sigma-M factor YhdL (yhdL).